Reading from the N-terminus, the 183-residue chain is ATP-dependent protease subunit HslV (183 aa).

Threonine 13 is a catalytic residue. Glycine 168, cysteine 171, and threonine 174 together coordinate Na(+).

The protein belongs to the peptidase T1B family. HslV subfamily. As to quaternary structure, a double ring-shaped homohexamer of HslV is capped on each side by a ring-shaped HslU homohexamer. The assembly of the HslU/HslV complex is dependent on binding of ATP.

The protein resides in the cytoplasm. It catalyses the reaction ATP-dependent cleavage of peptide bonds with broad specificity.. Its activity is regulated as follows. Allosterically activated by HslU binding. Protease subunit of a proteasome-like degradation complex believed to be a general protein degrading machinery. The polypeptide is ATP-dependent protease subunit HslV (Xanthomonas campestris pv. campestris (strain ATCC 33913 / DSM 3586 / NCPPB 528 / LMG 568 / P 25)).